The chain runs to 146 residues: Phospholipase A2, membrane associated (146 aa).

The signal sequence occupies residues 1–21; that stretch reads MKVLLLLAASIMAFGSIQVQG. 7 cysteine pairs are disulfide-bonded: cysteine 47-cysteine 139, cysteine 49-cysteine 65, cysteine 64-cysteine 119, cysteine 70-cysteine 146, cysteine 71-cysteine 112, cysteine 80-cysteine 105, and cysteine 98-cysteine 110. Ca(2+)-binding residues include histidine 48, glycine 50, and glycine 52. Histidine 68 is an active-site residue. Aspartate 69 serves as a coordination point for Ca(2+). Aspartate 113 is an active-site residue.

This sequence belongs to the phospholipase A2 family. Ca(2+) is required as a cofactor. Mainly in the Paneth cells adjacent to the stem population in the small intestines.

The protein localises to the secreted. It localises to the cell membrane. Its subcellular location is the mitochondrion outer membrane. It carries out the reaction a 1,2-diacyl-sn-glycero-3-phosphoethanolamine + H2O = a 1-acyl-sn-glycero-3-phosphoethanolamine + a fatty acid + H(+). It catalyses the reaction 1-hexadecanoyl-2-(9Z-octadecenoyl)-sn-glycero-3-phosphoethanolamine + H2O = 1-hexadecanoyl-sn-glycero-3-phosphoethanolamine + (9Z)-octadecenoate + H(+). The enzyme catalyses 1-hexadecanoyl-2-(9Z,12Z-octadecadienoyl)-sn-glycero-3-phosphoethanolamine + H2O = 1-hexadecanoyl-sn-glycero-3-phosphoethanolamine + (9Z,12Z)-octadecadienoate + H(+). The catalysed reaction is 1-hexadecanoyl-2-(5Z,8Z,11Z,14Z-eicosatetraenoyl)-sn-glycero-3-phosphoethanolamine + H2O = 1-hexadecanoyl-sn-glycero-3-phosphoethanolamine + (5Z,8Z,11Z,14Z)-eicosatetraenoate + H(+). It carries out the reaction N-hexadecanoyl-1,2-di-(9Z-octadecenoyl)-sn-glycero-3-phosphoethanolamine + H2O = N-hexadecanoyl-1-(9Z-octadecenoyl)-sn-glycero-3-phosphoethanolamine + (9Z)-octadecenoate + H(+). It catalyses the reaction 1,2-dihexadecanoyl-sn-glycero-3-phospho-(1'-sn-glycerol) + H2O = 1-hexadecanoyl-sn-glycero-3-phospho-(1'-sn-glycerol) + hexadecanoate + H(+). The enzyme catalyses 1-hexadecanoyl-2-(9Z-octadecenoyl)-sn-glycero-3-phosphoglycerol + H2O = 1-hexadecanoyl-sn-glycero-3-phosphoglycerol + (9Z)-octadecenoate + H(+). The catalysed reaction is 1-hexadecanoyl-2-(9Z-octadecenoyl)-sn-glycero-3-phospho-(1'-sn-glycerol) + H2O = 1-hexadecanoyl-sn-glycero-3-phospho-(1'-sn-glycerol) + (9Z)-octadecenoate + H(+). It carries out the reaction a 1,2-diacyl-sn-glycero-3-phosphocholine + H2O = a 1-acyl-sn-glycero-3-phosphocholine + a fatty acid + H(+). It catalyses the reaction 1,2-dihexadecanoyl-sn-glycero-3-phosphocholine + H2O = 1-hexadecanoyl-sn-glycero-3-phosphocholine + hexadecanoate + H(+). The enzyme catalyses 1-hexadecanoyl-2-(9Z-octadecenoyl)-sn-glycero-3-phosphocholine + H2O = 1-hexadecanoyl-sn-glycero-3-phosphocholine + (9Z)-octadecenoate + H(+). The catalysed reaction is 1-hexadecanoyl-2-(9Z,12Z-octadecadienoyl)-sn-glycero-3-phosphocholine + H2O = (9Z,12Z)-octadecadienoate + 1-hexadecanoyl-sn-glycero-3-phosphocholine + H(+). It carries out the reaction 1-hexadecanoyl-2-(4Z,7Z,10Z,13Z,16Z,19Z-docosahexaenoyl)-sn-glycero-3-phosphocholine + H2O = (4Z,7Z,10Z,13Z,16Z,19Z)-docosahexaenoate + 1-hexadecanoyl-sn-glycero-3-phosphocholine + H(+). Functionally, secretory calcium-dependent phospholipase A2 that primarily targets extracellular phospholipids with implications in host antimicrobial defense, inflammatory response and tissue regeneration. Hydrolyzes the ester bond of the fatty acyl group attached at sn-2 position of phospholipids (phospholipase A2 activity) with preference for phosphatidylethanolamines and phosphatidylglycerols over phosphatidylcholines. Contributes to lipid remodeling of cellular membranes and generation of lipid mediators involved in pathogen clearance. Displays bactericidal activity against Gram-positive bacteria by directly hydrolyzing phospholipids of the bacterial membrane. Upon sterile inflammation, targets membrane phospholipids of extracellular mitochondria released from activated platelets, generating free unsaturated fatty acids such as arachidonate that is used by neighboring leukocytes to synthesize inflammatory eicosanoids such as leukotrienes. Simultaneously, by compromising mitochondrial membrane integrity, promotes the release in circulation of potent damage-associated molecular pattern molecules that activate the innate immune response. Plays a stem cell regulator role in the intestinal crypt. Within intracellular compartment mediates Paneth cell differentiation and its stem cell supporting functions by inhibiting Wnt signaling pathway in intestinal stem cell (ICS). Secreted in the intestinal lumen upon inflammation, acts in an autocrine way and promotes prostaglandin E2 synthesis that stimulates Wnt signaling pathway in ICS cells and tissue regeneration. May play a role in the biosynthesis of N-acyl ethanolamines that regulate energy metabolism and inflammation. Hydrolyzes N-acyl phosphatidylethanolamines to N-acyl lysophosphatidylethanolamines, which are further cleaved by a lysophospholipase D to release N-acyl ethanolamines. Independent of its catalytic activity, acts as a ligand for integrins. Binds to and activates integrins ITGAV:ITGB3, ITGA4:ITGB1 and ITGA5:ITGB1. Binds to a site (site 2) which is distinct from the classical ligand-binding site (site 1) and induces integrin conformational changes and enhanced ligand binding to site 1. Induces cell proliferation in an integrin-dependent manner. The sequence is that of Phospholipase A2, membrane associated (Pla2g2a) from Mus musculus (Mouse).